Reading from the N-terminus, the 386-residue chain is tRNA-specific 2-thiouridylase MnmA (386 aa).

ATP-binding positions include 9–16 (GMSGGVDS) and Met35. Positions 95 to 97 (NPD) are interaction with target base in tRNA. The Nucleophile role is filled by Cys100. A disulfide bridge connects residues Cys100 and Cys196. Gly124 contributes to the ATP binding site. The segment at 146–148 (KDQ) is interaction with tRNA. Cys196 (cysteine persulfide intermediate) is an active-site residue. An interaction with tRNA region spans residues 308–309 (RY).

It belongs to the MnmA/TRMU family.

The protein localises to the cytoplasm. The enzyme catalyses S-sulfanyl-L-cysteinyl-[protein] + uridine(34) in tRNA + AH2 + ATP = 2-thiouridine(34) in tRNA + L-cysteinyl-[protein] + A + AMP + diphosphate + H(+). In terms of biological role, catalyzes the 2-thiolation of uridine at the wobble position (U34) of tRNA, leading to the formation of s(2)U34. The polypeptide is tRNA-specific 2-thiouridylase MnmA (Burkholderia thailandensis (strain ATCC 700388 / DSM 13276 / CCUG 48851 / CIP 106301 / E264)).